The following is a 401-amino-acid chain: S-adenosylmethionine synthase (401 aa).

135–140 (GHGSGD) serves as a coordination point for ATP.

The protein belongs to the AdoMet synthase 2 family. Requires Mg(2+) as cofactor.

The enzyme catalyses L-methionine + ATP + H2O = S-adenosyl-L-methionine + phosphate + diphosphate. The protein operates within amino-acid biosynthesis; S-adenosyl-L-methionine biosynthesis; S-adenosyl-L-methionine from L-methionine: step 1/1. Catalyzes the formation of S-adenosylmethionine from methionine and ATP. This chain is S-adenosylmethionine synthase, found in Methanobrevibacter smithii (strain ATCC 35061 / DSM 861 / OCM 144 / PS).